The following is a 143-amino-acid chain: Large ribosomal subunit protein uL16c (143 aa).

Belongs to the universal ribosomal protein uL16 family. As to quaternary structure, part of the 50S ribosomal subunit.

The protein resides in the plastid. It localises to the chloroplast. This is Large ribosomal subunit protein uL16c from Spirogyra maxima (Green alga).